A 142-amino-acid polypeptide reads, in one-letter code: Small ribosomal subunit protein uS9 (142 aa).

This sequence belongs to the universal ribosomal protein uS9 family.

The sequence is that of Small ribosomal subunit protein uS9 (RPS16) from Debaryomyces hansenii (strain ATCC 36239 / CBS 767 / BCRC 21394 / JCM 1990 / NBRC 0083 / IGC 2968) (Yeast).